The sequence spans 179 residues: Bifunctional protein PyrR (179 aa).

The short motif at 99–111 is the PRPP-binding element; it reads VILVDDVLYTGRT.

It belongs to the purine/pyrimidine phosphoribosyltransferase family. PyrR subfamily. In terms of assembly, homodimer and homohexamer; in equilibrium.

It catalyses the reaction UMP + diphosphate = 5-phospho-alpha-D-ribose 1-diphosphate + uracil. Its function is as follows. Regulates transcriptional attenuation of the pyrimidine nucleotide (pyr) operon by binding in a uridine-dependent manner to specific sites on pyr mRNA. This disrupts an antiterminator hairpin in the RNA and favors formation of a downstream transcription terminator, leading to a reduced expression of downstream genes. Also displays a weak uracil phosphoribosyltransferase activity which is not physiologically significant. This Brevibacillus brevis (strain 47 / JCM 6285 / NBRC 100599) protein is Bifunctional protein PyrR.